The following is a 292-amino-acid chain: MELLCCEGTRHAPRAGPDPRLLGDQRVLQSLLRLEERYVPRASYFQCVQKEIKPHMRKMLAYWMLEVCEEQRCEEDVFPLAMNYLDRYLSCVPTRKAQLQLLGTVCLLLASKLRETTPLTIEKLCIYTDQAVAPWQLREWEVLVLGKLKWDLAAVIAHDFLALILHRLSLPSDRQALVKKHAQTFLALCATDYTFAMYPPSMIATGSIGAAVLGLGACSMSADELTELLAGITGTEVDCLRACQEQIEAALRESLREAAQTAPSPVPKAPRGSSSQGPSQTSTPTDVTAIHL.

Positions 27–152 (VLQSLLRLEE…LVLGKLKWDL (126 aa)) constitute a Cyclin N-terminal domain. Residues 256 to 292 (REAAQTAPSPVPKAPRGSSSQGPSQTSTPTDVTAIHL) form a disordered region. Residues S264 and S279 each carry the phosphoserine modification. The span at 272-285 (GSSSQGPSQTSTPT) shows a compositional bias: low complexity. T283 carries the post-translational modification Phosphothreonine.

Belongs to the cyclin family. Cyclin D subfamily. Interacts with the CDK4 and CDK6 protein kinases to form a serine/threonine kinase holoenzyme complex. The cyclin subunit imparts substrate specificity to the complex. Interacts with ATF5. Interacts with EIF3K. Component of the ternary complex cyclin D/CDK4/CDKN1B required for nuclear translocation and modulation of CDK4-mediated kinase activity. Can form similar complexes with either CDKN1A or CDKN2A. In terms of processing, phosphorylation at Thr-283 by MAP kinases is required for ubiquitination and degradation by the DCX(AMBRA1) complex. Ubiquitinated by the DCX(AMBRA1) complex during the transition from G1 to S cell phase, leading to its degradation: ubiquitination is dependent on Thr-283 phosphorylation. The DCX(AMBRA1) complex represents the major regulator of CCND3 stability during the G1/S transition. Polyubiquitinated by the SCF(FBXL2) complex, leading to proteasomal degradation.

It localises to the nucleus. The protein resides in the cytoplasm. Its function is as follows. Regulatory component of the cyclin D3-CDK4 (DC) complex that phosphorylates and inhibits members of the retinoblastoma (RB) protein family including RB1 and regulates the cell-cycle during G(1)/S transition. Phosphorylation of RB1 allows dissociation of the transcription factor E2F from the RB/E2F complex and the subsequent transcription of E2F target genes which are responsible for the progression through the G(1) phase. Hypophosphorylates RB1 in early G(1) phase. Cyclin D-CDK4 complexes are major integrators of various mitogenenic and antimitogenic signals. Component of the ternary complex, cyclin D3/CDK4/CDKN1B, required for nuclear translocation and activity of the cyclin D-CDK4 complex. Shows transcriptional coactivator activity with ATF5 independently of CDK4. This is G1/S-specific cyclin-D3 from Mus musculus (Mouse).